Reading from the N-terminus, the 347-residue chain is Lipoyl synthase (347 aa).

[4Fe-4S] cluster-binding residues include Cys55, Cys60, Cys66, Cys81, Cys85, Cys88, and Ser292. In terms of domain architecture, Radical SAM core spans 67–281 (WEDREASFLI…SEAAYDMGFP (215 aa)).

This sequence belongs to the radical SAM superfamily. Lipoyl synthase family. Requires [4Fe-4S] cluster as cofactor.

It is found in the cytoplasm. It carries out the reaction [[Fe-S] cluster scaffold protein carrying a second [4Fe-4S](2+) cluster] + N(6)-octanoyl-L-lysyl-[protein] + 2 oxidized [2Fe-2S]-[ferredoxin] + 2 S-adenosyl-L-methionine + 4 H(+) = [[Fe-S] cluster scaffold protein] + N(6)-[(R)-dihydrolipoyl]-L-lysyl-[protein] + 4 Fe(3+) + 2 hydrogen sulfide + 2 5'-deoxyadenosine + 2 L-methionine + 2 reduced [2Fe-2S]-[ferredoxin]. Its pathway is protein modification; protein lipoylation via endogenous pathway; protein N(6)-(lipoyl)lysine from octanoyl-[acyl-carrier-protein]: step 2/2. Functionally, catalyzes the radical-mediated insertion of two sulfur atoms into the C-6 and C-8 positions of the octanoyl moiety bound to the lipoyl domains of lipoate-dependent enzymes, thereby converting the octanoylated domains into lipoylated derivatives. The protein is Lipoyl synthase of Corynebacterium urealyticum (strain ATCC 43042 / DSM 7109).